The following is a 377-amino-acid chain: LIM/homeobox protein Lhx9 (377 aa).

2 LIM zinc-binding domains span residues 50–111 and 112–174; these read ALCA…RFSV and QRCA…LVQG. 3 disordered regions span residues 228–249, 309–346, and 358–377; these read NEND…QKTK, RQEN…TDLT, and SSLD…TNLF. The segment at residues 248 to 307 is a DNA-binding region (homeobox); it reads TKXMRTSFKHHQLRTMKSYFAINHNPDAKDLKQLAQKTGLTKRVLQVWFQNARAKFRRNV. The segment covering 333-346 has biased composition (low complexity); sequence LTPPSTATTLTDLT. Positions 365–377 are enriched in polar residues; it reads SGSPPQTTLTNLF.

The protein resides in the nucleus. In terms of biological role, may be involved in gonadal development. The protein is LIM/homeobox protein Lhx9 (lhx9) of Psalidodon fasciatus (Banded astyanax).